Here is a 735-residue protein sequence, read N- to C-terminus: Urea active transporter (735 aa).

The Cytoplasmic portion of the chain corresponds to 1-14 (MGEFKPPLPQGAGY). A helical membrane pass occupies residues 15 to 35 (AIVLGLGAVFAGMMVLTTYLL). Over 36–85 (KRYQKEIITAEEFTTAGRSVKTGLVAAAVVSSWIWCSTLLTSSTKEYADG) the chain is Extracellular. The chain crosses the membrane as a helical span at residues 86–106 (IFGGYAYAAGACFQIIAFAIL). At 107 to 130 (AIKTKQMAPNAHTYLELVRTRYGK) the chain is on the cytoplasmic side. The helical transmembrane segment at 131–151 (IGHGCYLFYAIATNILVTSML) threads the bilayer. Over 152-166 (LTSGSAVFSDLTGMN) the chain is Extracellular. Residues 167-187 (TIASCFLLPVGVVVYTLFGGI) form a helical membrane-spanning segment. Residues 188-189 (KA) lie on the Cytoplasmic side of the membrane. Residues 190–210 (TFLTDYMHTCVIIIIVLVFAF) traverse the membrane as a helical segment. Residues 211–253 (KVYATSDVLGSPGKVYDLVREAAKRHPVDGNYQGEYMTMTSKS) lie on the Extracellular side of the membrane. A helical transmembrane segment spans residues 254-274 (AGILLIINLIGNFGTVFLDNG). Residues 275–295 (YWNKAISASPAASLKAYAIGG) are Cytoplasmic-facing. The chain crosses the membrane as a helical span at residues 296 to 316 (LAWFAVPSLISLTMGLACLAV). The Extracellular segment spans residues 317–343 (ETSPNFPTYPDPLTSFQANSGLVLPAA). Residues 344–364 (AIAIMGKGGAVASLLMIFMAV) form a helical membrane-spanning segment. At 365 to 403 (TSAMSAELIAVSSVFTYDIYREYIDPRASGKKLIYTSHV) the chain is on the cytoplasmic side. Residues 404–424 (ACIFFGLAMSGFSVGLYYGGI) traverse the membrane as a helical segment. S425 is a topological domain (extracellular). The chain crosses the membrane as a helical span at residues 426 to 446 (MGYIYEMMGIIISSAVLPVVL). The Cytoplasmic segment spans residues 447 to 454 (TLCSKDMN). Residues 455 to 475 (LVAAVVSPILGTGLAIMSWLV) traverse the membrane as a helical segment. Over 476–496 (CTKSLYKELTVDTTFMDYPML) the chain is Extracellular. A helical membrane pass occupies residues 497–517 (TGNLVALLSPAIFIPILTYVF). Topologically, residues 518 to 618 (KPQNFDWEKM…EQRELARGLK (101 aa)) are cytoplasmic. A disordered region spans residues 553 to 572 (ANDKEQEEETNSLVSDSEKN). Residues 619-639 (IAYFLCVFFALAFLVVWPMPM) traverse the membrane as a helical segment. The Extracellular segment spans residues 640 to 650 (YGSKYIFSKKF). A helical membrane pass occupies residues 651-671 (FTGWVVVMIIWLFFSAFAVCI). Over 672–735 (YPLWEGRHGI…SHFGQVDEII (64 aa)) the chain is Cytoplasmic.

The protein belongs to the sodium:solute symporter (SSF) (TC 2.A.21) family. As to quaternary structure, may polymerize.

The protein localises to the membrane. Its function is as follows. Required for active transport of urea. In Saccharomyces cerevisiae (strain ATCC 204508 / S288c) (Baker's yeast), this protein is Urea active transporter (DUR3).